Consider the following 2876-residue polypeptide: Nipped-B-like protein B (2876 aa).

2 stretches are compositionally biased toward polar residues: residues 124–142 (PQNSMHGSPASNYQQTTIT) and 149–167 (YVQTQAGSGSRYMPQQNSP). 4 disordered regions span residues 124–197 (PQNS…PIQQ), 246–367 (NDEG…SDAE), 439–494 (RESA…AGNK), and 525–1017 (EGPV…FPNY). Residues 276–290 (GPRPPLILQSPPPYT) are compositionally biased toward pro residues. Residues 439–457 (RESAIERERCSKEVQDKDK) show a composition bias toward basic and acidic residues. The span at 471–480 (PGAAGTAGAS) shows a compositional bias: low complexity. The span at 481-490 (GTPGVGGGCN) shows a compositional bias: gly residues. 3 stretches are compositionally biased toward basic and acidic residues: residues 556–577 (SKTDGEVQRTVDGRPEVIKQRV), 586–955 (VDGR…EQRS), and 962–1005 (VKQE…HKPQ). The PxVxL motif signature appears at 1068 to 1081 (NKGAKPVVVLKKLS). Disordered regions lie at residues 1088-1229 (MISN…EPKL) and 1724-1747 (TEKAMKSQRDDDSSDGPHHAKDVE). Positions 1090–1100 (SNSRSSKSSRS) are enriched in low complexity. Basic and acidic residues-rich tracts occupy residues 1104–1119 (RFRETDSRLPLCERVK) and 1156–1183 (KDRDKTWEYEEKDRRGSGDHRRSFDSRR). Residues 1212-1223 (KLKKKEKQKKRK) are compositionally biased toward basic residues. HEAT repeat units lie at residues 1803 to 1841 (AQSFDIYLTQILRVLGESAIAVRTKAMKCLSEVVAVDPS), 1879 to 1917 (PQLTEQYYDMLIERILDTGISVRKRVIKILRDICLEQPT), 1981 to 2020 (YDWFEQLLQNLLKSEEDASYKPARKACAQLVDSLVEHILK), 2203 to 2241 (VVIKDKVLELLLYFTKNDDEEVQTKAIIGLGFLFIQDPG), and 2349 to 2387 (LIHPVQCVPYLIAMGTDSEPTMRNKADQQLVEIDKKYTG). 2 disordered regions span residues 2516-2590 (EVVK…DSDL) and 2728-2774 (ALLG…GHRN). Basic residues predominate over residues 2519 to 2537 (KKKKKKKKKKKQKQKRGKK). Low complexity predominate over residues 2548 to 2563 (RSSSSSSSSSSSSSDS). Residues 2762–2774 (RTGDSAEASGHRN) are compositionally biased toward basic and acidic residues.

This sequence belongs to the SCC2/Nipped-B family.

The protein localises to the nucleus. Functionally, may play a structural role in chromatin. Involved in sister chromatid cohesion, possibly by facilitating the cohesin complex loading. Transcription factor, which may promote cortical neuron migration during brain development by regulating the transcription of crucial genes in this process. The chain is Nipped-B-like protein B (nipblb) from Danio rerio (Zebrafish).